The sequence spans 709 residues: Elongation factor G (709 aa).

Residues 10–286 enclose the tr-type G domain; it reads NKVRNIGIMA…AVVDFLPSPL (277 aa). Residues 19 to 26, 83 to 87, and 137 to 140 contribute to the GTP site; these read AHIDAGKT, DTPGH, and NKMD.

This sequence belongs to the TRAFAC class translation factor GTPase superfamily. Classic translation factor GTPase family. EF-G/EF-2 subfamily.

It is found in the cytoplasm. Its function is as follows. Catalyzes the GTP-dependent ribosomal translocation step during translation elongation. During this step, the ribosome changes from the pre-translocational (PRE) to the post-translocational (POST) state as the newly formed A-site-bound peptidyl-tRNA and P-site-bound deacylated tRNA move to the P and E sites, respectively. Catalyzes the coordinated movement of the two tRNA molecules, the mRNA and conformational changes in the ribosome. In Corynebacterium glutamicum (strain R), this protein is Elongation factor G.